We begin with the raw amino-acid sequence, 184 residues long: PXMP2/4 family protein 3 (184 aa).

A signal peptide spans 1–44; that stretch reads MSNSKPLSLTDAVTTWYMKKLKSKPIQTKALTSATLSFISSVVA. 3 helical membrane-spanning segments follow: residues 58-78, 97-117, and 159-179; these read VVKF…WHII, IVDQ…VLAI, and LRVL…SILA.

The protein belongs to the peroxisomal membrane protein PXMP2/4 family.

It localises to the membrane. This Dictyostelium discoideum (Social amoeba) protein is PXMP2/4 family protein 3.